A 570-amino-acid polypeptide reads, in one-letter code: Probable electron transfer flavoprotein-ubiquinone oxidoreductase (570 aa).

Position 13-27 (13-27 (VVIVGAGPAGLSAAI)) interacts with FAD. 4 residues coordinate [4Fe-4S] cluster: cysteine 515, cysteine 539, cysteine 542, and cysteine 545. Positions 530–559 (KRFQINAANCVHCKTCDIKDPSQNITWVTP) constitute a 4Fe-4S ferredoxin-type domain.

[4Fe-4S] cluster is required as a cofactor. FAD serves as cofactor.

The catalysed reaction is a ubiquinone + reduced [electron-transfer flavoprotein] = a ubiquinol + oxidized [electron-transfer flavoprotein] + H(+). In terms of biological role, accepts electrons from ETF and reduces ubiquinone. The sequence is that of Probable electron transfer flavoprotein-ubiquinone oxidoreductase (etfD) from Acinetobacter baylyi (strain ATCC 33305 / BD413 / ADP1).